Consider the following 177-residue polypeptide: Secretion monitor (177 aa).

An N-terminal signal peptide occupies residues 1–37; the sequence is MIGILNRWRQFGRRYFWPHLLLGMVAASLGVPSNLSG.

The protein belongs to the SecM family.

The protein resides in the cytoplasm. It localises to the cytosol. It is found in the periplasm. Its function is as follows. Regulates secA expression by translational coupling of the secM secA operon. Translational pausing at a specific Pro residue 5 residues before the end of the protein may allow disruption of a mRNA repressor helix that normally suppresses secA translation initiation. This chain is Secretion monitor, found in Yersinia pseudotuberculosis serotype O:1b (strain IP 31758).